The sequence spans 360 residues: DNA replication and repair protein RecF (360 aa).

Residue 30–37 participates in ATP binding; the sequence is GHNGSGKT.

This sequence belongs to the RecF family.

Its subcellular location is the cytoplasm. Its function is as follows. The RecF protein is involved in DNA metabolism; it is required for DNA replication and normal SOS inducibility. RecF binds preferentially to single-stranded, linear DNA. It also seems to bind ATP. The polypeptide is DNA replication and repair protein RecF (Haemophilus ducreyi (strain 35000HP / ATCC 700724)).